A 466-amino-acid chain; its full sequence is Muscarinic acetylcholine receptor M2 (466 aa).

The Extracellular segment spans residues 1–22; that stretch reads MNNSTNSSNSGLALTSPYKTFE. 3 N-linked (GlcNAc...) asparagine glycosylation sites follow: Asn2, Asn3, and Asn6. A helical transmembrane segment spans residues 23–45; it reads VVFIVLVAGSLSLVTIIGNILVM. Residues 46-59 lie on the Cytoplasmic side of the membrane; sequence VSIKVNRHLQTVNN. A helical transmembrane segment spans residues 60-80; the sequence is YFLFSLACADLIIGVFSMNLY. Residues 81–97 are Extracellular-facing; sequence TLYTVIGYWPLGPVVCD. Cys96 and Cys176 are oxidised to a cystine. The helical transmembrane segment at 98–119 threads the bilayer; the sequence is LWLALDYVVSNASVMNLLIISF. An Important for signaling motif is present at residues 120–122; sequence DRY. Residues 120–139 are Cytoplasmic-facing; that stretch reads DRYFCVTKPLTYPVKRTTKM. The helical transmembrane segment at 140–162 threads the bilayer; the sequence is AGMMIAAAWVLSFILWAPAILFW. Residues 163–184 lie on the Extracellular side of the membrane; sequence QFIVGVRTVEDGECYIQFFSNA. A helical membrane pass occupies residues 185–209; the sequence is AVTFGTAIAAFYLPVIIMTVLYWHI. At 210 to 387 the chain is on the cytoplasmic side; the sequence is SRASKSRIKK…PPSREKKVTR (178 aa). A disordered region spans residues 218–320; sequence KKDKKEPVAN…SLGHSKDENS (103 aa). Ser232 bears the Phosphoserine mark. A compositionally biased stretch (basic and acidic residues) spans 254–270; the sequence is ALEHNKIQNGKAPRDAV. Composition is skewed to polar residues over residues 284–293 and 304–313; these read NDSTSVSAVA and DENTVSTSLG. Residues 388–410 traverse the membrane as a helical segment; that stretch reads TILAILLAFIITWAPYNVMVLIN. The Extracellular portion of the chain corresponds to 411–418; that stretch reads TFCAPCIP. A disulfide bridge connects residues Cys413 and Cys416. A helical membrane pass occupies residues 419–442; the sequence is NTVWTIGYWLCYINSTINPACYAL. The short motif at 436 to 440 is the Important for signaling element; it reads NPACY. The Cytoplasmic portion of the chain corresponds to 443-466; it reads CNATFKKTFKHLLMCHYKNIGATR. Residues Thr446, Thr450, and Thr465 each carry the phosphothreonine modification.

It belongs to the G-protein coupled receptor 1 family. Muscarinic acetylcholine receptor subfamily. CHRM2 sub-subfamily. Interacts with ARRB1 and ARRB2. Interacts with RACK1; the interaction regulates CHRM2 internalization. In terms of processing, phosphorylated in response to agonist treatment.

It is found in the cell membrane. Its subcellular location is the postsynaptic cell membrane. In terms of biological role, the muscarinic acetylcholine receptor mediates various cellular responses, including inhibition of adenylate cyclase, breakdown of phosphoinositides and modulation of potassium channels through the action of G proteins. Primary transducing effect is adenylate cyclase inhibition. This is Muscarinic acetylcholine receptor M2 (CHRM2) from Sus scrofa (Pig).